The chain runs to 282 residues: sn-glycerol-3-phosphate transport system permease protein UgpE (282 aa).

6 helical membrane-spanning segments follow: residues 14–34, 86–106, 112–132, 146–168, 201–221, and 248–268; these read LILI…FVAS, MAIA…IVFF, MFFF…RILP, YAGL…QFFL, IAAL…WPLL, and WNYV…VVVL. The 192-residue stretch at 78–269 folds into the ABC transmembrane type-1 domain; that stretch reads LWNSFVVAMA…IPLILVVVLM (192 aa).

Belongs to the binding-protein-dependent transport system permease family. As to quaternary structure, the complex is composed of two ATP-binding proteins (UgpC), two transmembrane proteins (UgpA and UgpE) and a solute-binding protein (UgpB).

The protein localises to the cell inner membrane. Its function is as follows. Part of the ABC transporter complex UgpBAEC involved in sn-glycerol-3-phosphate (G3P) import. Probably responsible for the translocation of the substrate across the membrane. The chain is sn-glycerol-3-phosphate transport system permease protein UgpE (ugpE) from Brucella abortus (strain 2308).